Here is a 357-residue protein sequence, read N- to C-terminus: Thiamine thiazole synthase 3, chloroplastic (357 aa).

The transit peptide at 1-51 (MSISAAGVATGLGANVELKSNVGSSSSSVAGVRLFTSRKAQLRRCAAPATS) directs the protein to the chloroplast. Substrate-binding positions include alanine 103, 123 to 124 (EQ), glycine 131, and alanine 196. Cysteine 225 carries the 2,3-didehydroalanine (Cys) modification. Substrate-binding positions include aspartate 227, histidine 242, methionine 294, and 304–306 (RMG).

Belongs to the THI4 family. As to quaternary structure, homooctamer. Fe cation serves as cofactor. In terms of processing, during the catalytic reaction, a sulfide is transferred from Cys-225 to a reaction intermediate, generating a dehydroalanine residue.

Its subcellular location is the plastid. The protein resides in the chloroplast. It carries out the reaction [ADP-thiazole synthase]-L-cysteine + glycine + NAD(+) = [ADP-thiazole synthase]-dehydroalanine + ADP-5-ethyl-4-methylthiazole-2-carboxylate + nicotinamide + 3 H2O + 2 H(+). Its function is as follows. Involved in biosynthesis of the thiamine precursor thiazole. Catalyzes the conversion of NAD and glycine to adenosine diphosphate 5-(2-hydroxyethyl)-4-methylthiazole-2-carboxylic acid (ADT), an adenylated thiazole intermediate. The reaction includes an iron-dependent sulfide transfer from a conserved cysteine residue of the protein to a thiazole intermediate. The enzyme can only undergo a single turnover, which suggests it is a suicide enzyme. May have additional roles in adaptation to various stress conditions and in DNA damage tolerance. This is Thiamine thiazole synthase 3, chloroplastic from Physcomitrium patens (Spreading-leaved earth moss).